Consider the following 690-residue polypeptide: Ecdysone-inducible protein E75 (690 aa).

A DNA-binding region (nuclear receptor) is located at residues 44 to 120 (TVLCRVCGDK…VGMSRDAVRF (77 aa)). NR C4-type zinc fingers lie at residues 47–67 (CRVC…CEGC) and 84–108 (CTKN…LKKC). One can recognise an NR LBD domain in the interval 154–401 (DAPRLLARVV…QQMWGDEEVC (248 aa)). Disordered regions lie at residues 411–434 (SARS…CGTP), 467–516 (LTVT…LEEH), 562–604 (RDTG…LRAP), and 666–690 (APQP…MLEA). Over residues 414–434 (SPLGSVSSSESGEAPSDCGTP) the composition is skewed to low complexity. Basic and acidic residues predominate over residues 562 to 571 (RDTGEAEARP). Residues 573-588 (RPTPSPQPMHPHPGSP) are compositionally biased toward pro residues. 2 stretches are compositionally biased toward low complexity: residues 589–604 (AHPA…LRAP) and 667–676 (PQPLNLSKKS).

Belongs to the nuclear hormone receptor family. NR1 subfamily.

It is found in the nucleus. Its function is as follows. Orphan receptor possibly involved in the regulation of genes in the ecdysteroid cascade. The polypeptide is Ecdysone-inducible protein E75 (E75) (Choristoneura fumiferana (Spruce budworm moth)).